The chain runs to 1410 residues: non-specific serine/threonine protein kinase (1410 aa).

In terms of domain architecture, Protein kinase spans 27–299 (THYVSQLNNS…LLEKYRTIYF (273 aa)). Residues 33-41 (LNNSRFLKT) and K54 contribute to the ATP site. Residue D147 is the Proton acceptor of the active site. HEAT repeat units follow at residues 441–478 (TKLDRTLPYLVAALEDDSTRVKVMAMNCVTTLIKEVKH), 485–525 (NIFV…KANL), 556–594 (RKLQQLFEDLTVSILTDPEISVKVALLKNILPLCKYFGR), 596–633 (KTNDVILSHLITYLNDRDPALRMYLVECISGIAILLGP), and 635–672 (TMEQYILPLIIQTITDEEELVVVSVLKNLKDLLKTRFV). 3 WD repeats span residues 1037-1076 (FDGTLLQSEVLLGTKSFMIYGSDQGALTVWDIDRLANEKS), 1187-1226 (ADYGCTISMVLDDKNNLLFFGTVSGIIEMWDARYFVQIRA), and 1230-1273 (GESL…CKHV).

The protein belongs to the protein kinase superfamily. Ser/Thr protein kinase family. As to quaternary structure, component of the autophagy-specific VPS34 PI3-kinase complex I composed of VPS15, VPS30, VPS34, ATG14 and ATG38; and of the VPS34 PI3-kinase complex II composed of VPS15, VPS30, VPS34 and VPS38. Post-translationally, autophosphorylated.

Its subcellular location is the golgi apparatus. The protein localises to the trans-Golgi network membrane. It is found in the endosome membrane. It carries out the reaction L-seryl-[protein] + ATP = O-phospho-L-seryl-[protein] + ADP + H(+). The catalysed reaction is L-threonyl-[protein] + ATP = O-phospho-L-threonyl-[protein] + ADP + H(+). Functionally, serine/threonine-protein kinase that plays a role in signaling in modulation of host immune response, intracellular survival and virulence. Required for impediment of phagosomal maturation in THP-1 macrophages. Regulatory subunit of the autophagy-specific VPS34 PI3-kinase complex I essential to recruit the ATG8-phosphatidylinositol conjugate and the ATG12-ATG5 conjugate to the pre-autophagosomal structure. Within the PS34 PI3-kinase complex I, VPS15-mediated phosphorylation of VPS34 may be required for recruiting VPS34 to the membrane but not for activation of its PI3K activity. Is also involved in endosome-to-Golgi retrograde transport as part of the VPS34 PI3-kinase complex II. This second complex is required for the endosome-to-Golgi retrieval of PEP1 and KEX2, and the recruitment of VPS5 and VPS7, two components of the retromer complex, to endosomal membranes (probably through the synthesis of a specific pool of phosphatidylinositol 3-phosphate recruiting the retromer to the endosomes). By regulating VPS34 kinase activity, VPS15 appears to be essential for the efficient delivery of soluble hydrolases to the yeast vacuole. In Candida glabrata (strain ATCC 2001 / BCRC 20586 / JCM 3761 / NBRC 0622 / NRRL Y-65 / CBS 138) (Yeast), this protein is non-specific serine/threonine protein kinase.